We begin with the raw amino-acid sequence, 84 residues long: Acid stress protein IbaG (84 aa).

This sequence belongs to the BolA/IbaG family.

Its function is as follows. Involved in cell resistance against acid stress. The chain is Acid stress protein IbaG from Escherichia coli O6:H1 (strain CFT073 / ATCC 700928 / UPEC).